The sequence spans 467 residues: tRNA modification GTPase MnmE (467 aa).

3 residues coordinate (6S)-5-formyl-5,6,7,8-tetrahydrofolate: arginine 27, glutamate 89, and arginine 128. In terms of domain architecture, TrmE-type G spans glycine 225–threonine 387. Asparagine 235 contacts K(+). GTP-binding positions include asparagine 235–serine 240, threonine 254–threonine 260, aspartate 279–glycine 282, and serine 368–arginine 370. Serine 239 contributes to the Mg(2+) binding site. K(+) is bound by residues threonine 254, isoleucine 256, and threonine 259. Threonine 260 provides a ligand contact to Mg(2+). Lysine 467 provides a ligand contact to (6S)-5-formyl-5,6,7,8-tetrahydrofolate.

It belongs to the TRAFAC class TrmE-Era-EngA-EngB-Septin-like GTPase superfamily. TrmE GTPase family. Homodimer. Heterotetramer of two MnmE and two MnmG subunits. Requires K(+) as cofactor.

It localises to the cytoplasm. Exhibits a very high intrinsic GTPase hydrolysis rate. Involved in the addition of a carboxymethylaminomethyl (cmnm) group at the wobble position (U34) of certain tRNAs, forming tRNA-cmnm(5)s(2)U34. This chain is tRNA modification GTPase MnmE, found in Desulfotalea psychrophila (strain LSv54 / DSM 12343).